Consider the following 427-residue polypeptide: Adenylosuccinate synthetase (427 aa).

GTP is bound by residues 12 to 18 (GDEGKGK) and 40 to 42 (GHT). The Proton acceptor role is filled by aspartate 13. Mg(2+) is bound by residues aspartate 13 and glycine 40. IMP is bound by residues 13–16 (DEGK), 38–41 (NAGH), threonine 128, arginine 142, glutamine 223, threonine 238, and arginine 302. Residue histidine 41 is the Proton donor of the active site. Residue 298–304 (TTTGRPR) participates in substrate binding. Residues arginine 304, 330-332 (KLD), and 412-414 (AVG) contribute to the GTP site.

The protein belongs to the adenylosuccinate synthetase family. As to quaternary structure, homodimer. It depends on Mg(2+) as a cofactor.

The protein localises to the cytoplasm. It catalyses the reaction IMP + L-aspartate + GTP = N(6)-(1,2-dicarboxyethyl)-AMP + GDP + phosphate + 2 H(+). The protein operates within purine metabolism; AMP biosynthesis via de novo pathway; AMP from IMP: step 1/2. Functionally, plays an important role in the de novo pathway of purine nucleotide biosynthesis. Catalyzes the first committed step in the biosynthesis of AMP from IMP. In Heliobacterium modesticaldum (strain ATCC 51547 / Ice1), this protein is Adenylosuccinate synthetase.